A 66-amino-acid polypeptide reads, in one-letter code: Small ribosomal subunit protein bS21 (66 aa).

It belongs to the bacterial ribosomal protein bS21 family.

In Maridesulfovibrio salexigens (strain ATCC 14822 / DSM 2638 / NCIMB 8403 / VKM B-1763) (Desulfovibrio salexigens), this protein is Small ribosomal subunit protein bS21.